Reading from the N-terminus, the 82-residue chain is ATP synthase subunit c (82 aa).

Helical transmembrane passes span 7–27 (AASV…PGIG) and 57–77 (LAFM…LLFA).

Belongs to the ATPase C chain family. F-type ATPases have 2 components, F(1) - the catalytic core - and F(0) - the membrane proton channel. F(1) has five subunits: alpha(3), beta(3), gamma(1), delta(1), epsilon(1). F(0) has four main subunits: a(1), b(1), b'(1) and c(10-14). The alpha and beta chains form an alternating ring which encloses part of the gamma chain. F(1) is attached to F(0) by a central stalk formed by the gamma and epsilon chains, while a peripheral stalk is formed by the delta, b and b' chains.

The protein localises to the cellular thylakoid membrane. F(1)F(0) ATP synthase produces ATP from ADP in the presence of a proton or sodium gradient. F-type ATPases consist of two structural domains, F(1) containing the extramembraneous catalytic core and F(0) containing the membrane proton channel, linked together by a central stalk and a peripheral stalk. During catalysis, ATP synthesis in the catalytic domain of F(1) is coupled via a rotary mechanism of the central stalk subunits to proton translocation. In terms of biological role, key component of the F(0) channel; it plays a direct role in translocation across the membrane. A homomeric c-ring of between 10-14 subunits forms the central stalk rotor element with the F(1) delta and epsilon subunits. The chain is ATP synthase subunit c from Synechococcus sp. (strain RCC307).